Consider the following 1094-residue polypeptide: Protein phosphatase 2C and cyclic nucleotide-binding/kinase domain-containing protein (1094 aa).

The 291-residue stretch at 107–397 (RCSFLSQRGY…DDITIIVVHI (291 aa)) folds into the PPM-type phosphatase domain. Residues D148, G149, D344, and D388 each contribute to the Mn(2+) site. A nucleoside 3',5'-cyclic phosphate is bound by residues 491 to 616 (LFRK…RSVD) and 617 to 758 (LLSR…RHSS). A Protein kinase domain is found at 785-1038 (TTCLSTTDCS…PESIKKHPWF (254 aa)). ATP is bound by residues 791-799 (TDCSEIGLV) and K811.

In the N-terminal section; belongs to the PP2C family. The protein in the C-terminal section; belongs to the protein kinase superfamily. AGC Ser/Thr protein kinase family. Mg(2+) is required as a cofactor. The cofactor is Mn(2+).

The catalysed reaction is O-phospho-L-seryl-[protein] + H2O = L-seryl-[protein] + phosphate. It catalyses the reaction O-phospho-L-threonyl-[protein] + H2O = L-threonyl-[protein] + phosphate. This is Protein phosphatase 2C and cyclic nucleotide-binding/kinase domain-containing protein from Arabidopsis thaliana (Mouse-ear cress).